The primary structure comprises 372 residues: GRASP65 homolog protein 1 (372 aa).

Met-1 is subject to N-acetylmethionine. PDZ GRASP-type domains are found at residues 66–183 (SGLR…WTPL) and 188–276 (FTYH…YGFL). Positions 66 to 292 (SGLRIVWVDE…KHCPQQAQQQ (227 aa)) are GRASP. The residue at position 155 (Ser-155) is a Phosphoserine. Residues 312–372 (VPSAFTAPPV…PPPQKQSSSD (61 aa)) form a disordered region.

Homodimer. Interacts with BUG1 (via C-terminus), probably forming a heterooligomer consisting of a GRH1 dimer and a BUG1 dimer. Interacts with COPII coat components SEC23, SEC24, SFB2 and SFB3. In terms of processing, N-terminal acetylation; by N-terminal acetyltransferase NatC.

It is found in the cytoplasm. The protein resides in the golgi apparatus. It localises to the cis-Golgi network membrane. Its function is as follows. Involved in the spindle assembly checkpoint. Involved in ER to Golgi vesicle-mediated transport by either facilitating USO1-dependent and -independent tethering or increasing target accuracy of fusion events of COPII-coated vesicles. The polypeptide is GRASP65 homolog protein 1 (GRH1) (Saccharomyces cerevisiae (strain ATCC 204508 / S288c) (Baker's yeast)).